Here is a 987-residue protein sequence, read N- to C-terminus: Nuclear matrix constituent protein 1b (987 aa).

The segment at 1 to 25 (MASPRSAGGVGGGGGGGGGSGGAAA) is disordered. Gly residues predominate over residues 8-24 (GGVGGGGGGGGGSGGAA). Coiled-coil stretches lie at residues 403 to 545 (LAEL…ERRA) and 594 to 717 (LSKI…DREA). 2 stretches are compositionally biased toward basic and acidic residues: residues 752–764 (SDIN…HDNS) and 898–908 (CKEHEYGDKGP). Disordered stretches follow at residues 752 to 775 (SDIN…FGRK) and 887 to 987 (HDEA…FLIT). The span at 944–954 (ATVSATETSNV) shows a compositional bias: polar residues. The segment covering 956–973 (GPEDNNDSDEEDEEEEEE) has biased composition (acidic residues).

This sequence belongs to the CRWN family. In terms of assembly, interacts with SWI3C.

Its subcellular location is the nucleus matrix. The protein localises to the nucleus lamina. Architectural component of nuclear structure that plays different roles in controlling nuclear size and morphology. Involved in the modification of chromatin accessibility by interacting with SWI3C, a component of the chromatin-remodeling complex, to thus reduce the suppression effect of the complex. Acts as positive regulator of drought resistance and modulates root growth. Positively regulates the expression of genes related to root growth and drought resistance. This is Nuclear matrix constituent protein 1b from Oryza sativa subsp. japonica (Rice).